Here is an 818-residue protein sequence, read N- to C-terminus: Adhesion G protein-coupled receptor E5 (818 aa).

The signal sequence occupies residues 1–23 (MRGVRCPGLLVVCILLSLSGAGT). The Extracellular portion of the chain corresponds to 24-533 (QKAESKNCAK…VQDPRLELIT (510 aa)). Residues 27 to 68 (ESKNCAKWCPINSKCVSNRSCVCKPGFSSEKELITNPAESCE) enclose the EGF-like 1 domain. Disulfide bonds link Cys-31–Cys-41, Cys-35–Cys-47, Cys-49–Cys-67, Cys-73–Cys-86, Cys-80–Cys-95, Cys-97–Cys-118, Cys-169–Cys-182, Cys-176–Cys-191, Cys-193–Cys-212, Cys-218–Cys-231, Cys-225–Cys-240, and Cys-242–Cys-260. N-linked (GlcNAc...) asparagine glycosylation occurs at Asn-44. The EGF-like 2; calcium-binding domain maps to 69 to 119 (DINECLLPGFSCGDFAMCKNSEGSYTCVCNLGYKLLSGAESFVNESENTCQ). Asn-112 carries N-linked (GlcNAc...) asparagine glycosylation. The region spanning 165-213 (DVNECISGQNHCHQSTHCINKLGGYSCICRQGWKPVPGSPNGPVSTVCE) is the EGF-like 3; calcium-binding domain. Positions 214 to 261 (DVDECSSGQHQCHNSTVCKNTVGSYKCHCRPGWKPTSGSLRGPDTICQ) constitute an EGF-like 4; calcium-binding domain. Asn-227 carries N-linked (GlcNAc...) asparagine glycosylation. 2 N-linked (GlcNAc...) asparagine glycosylation sites follow: Asn-299 and Asn-395. The 179-residue stretch at 347-525 (PFTYTSPSNT…AILMAQYHVQ (179 aa)) folds into the GAIN-B domain. Ser-425 is modified (phosphoserine). 2 N-linked (GlcNAc...) asparagine glycosylation sites follow: Asn-461 and Asn-502. Cystine bridges form between Cys-482–Cys-507 and Cys-499–Cys-509. The segment at 482 to 525 (CAFWKAHNGNGYWDTDGCSMNGTGFCHCNHLTSFAILMAQYHVQ) is GPS. A helical transmembrane segment spans residues 534-554 (KVGLLLSLICLLLCILTFLLV). Over 555–562 (KPIQSSRT) the chain is Cytoplasmic. Residues 563–583 (MVHLHLCICLFLGSIIFLVGV) traverse the membrane as a helical segment. The Extracellular portion of the chain corresponds to 584–602 (ENEGGEVGLRCRLVAMMLH). The chain crosses the membrane as a helical span at residues 603–623 (FCFLAAFCWMALEGVELYFLV). Over 624-637 (VRVFQGQGLSTWQR) the chain is Cytoplasmic. The chain crosses the membrane as a helical span at residues 638–658 (CLIGYGVPLLIVAISMAVVKM). Topologically, residues 659 to 679 (DGYGHATYCWLDFRKQGFLWS) are extracellular. Residues 680 to 700 (FSGPVAFIIFCNAAIFVITVW) traverse the membrane as a helical segment. Residues 701 to 723 (KLTKKFSEINPNMKKLRKARVLT) are Cytoplasmic-facing. A helical transmembrane segment spans residues 724–744 (ITAIAQLLVLGCTWGFGLFLF). At 745–752 (NPHSTWLS) the chain is on the extracellular side. A helical transmembrane segment spans residues 753–773 (YIFTLLNCLQGLFLYVMLCLL). Residues 774–818 (NKKVREEYWKWACMVTGSKYTEFNSSTTGTGTSQTRALRSSESGM) are Cytoplasmic-facing. Ser-798 carries the phosphoserine modification. Positions 799–808 (STTGTGTSQT) are enriched in low complexity. Residues 799–818 (STTGTGTSQTRALRSSESGM) form a disordered region. The residue at position 808 (Thr-808) is a Phosphothreonine. Residues 809–818 (RALRSSESGM) are compositionally biased toward polar residues. Phosphoserine occurs at positions 814 and 816.

Belongs to the G-protein coupled receptor 2 family. LN-TM7 subfamily. As to quaternary structure, forms a heterodimer, consisting of a large extracellular region (alpha subunit) non-covalently linked to a seven-transmembrane moiety (beta subunit). Interacts with complement decay-accelerating factor (DAF). The largest isoform (isoform 1) do not interact with DAF. Also interacts with chondroitin sulfate. In terms of processing, proteolytically cleaved into 2 subunits, an extracellular alpha subunit and a seven-transmembrane subunit. Although predominantly expressed by cells of the immune system, expressed ubiquitously with particularly high levels of expression in the lung and the thymus gland. In the spleen, expression is detected on most myeloid cells and variable portions of T-cells, B-cells and NK cells. In the bone marrow, expressed in nearly all myeloid cells, whereas little if any expression is found on erythroid cells.

It is found in the cell membrane. The protein resides in the secreted. Its subcellular location is the extracellular space. Functionally, receptor potentially involved in both adhesion and signaling processes early after leukocyte activation. Plays an essential role in leukocyte migration. This Mus musculus (Mouse) protein is Adhesion G protein-coupled receptor E5.